The chain runs to 261 residues: Small ribosomal subunit protein eS1A (261 aa).

The segment covering 1–18 has biased composition (basic residues); sequence MTLGKNKRISKGGKRGKK. The segment at 1–23 is disordered; sequence MTLGKNKRISKGGKRGKKKTQET.

The protein belongs to the eukaryotic ribosomal protein eS1 family. As to quaternary structure, component of the small ribosomal subunit. Mature ribosomes consist of a small (40S) and a large (60S) subunit. The 40S subunit contains about 33 different proteins and 1 molecule of RNA (18S). The 60S subunit contains about 49 different proteins and 3 molecules of RNA (25S, 5.8S and 5S).

It is found in the cytoplasm. This Trypanosoma cruzi (strain CL Brener) protein is Small ribosomal subunit protein eS1A.